The chain runs to 37 residues: Large ribosomal subunit protein bL36 (37 aa).

This sequence belongs to the bacterial ribosomal protein bL36 family.

This chain is Large ribosomal subunit protein bL36, found in Hydrogenobaculum sp. (strain Y04AAS1).